Reading from the N-terminus, the 173-residue chain is MFRIASRQTRNLRALSSSKNWARSLVNTRSFRAAASVQNNNAQIGEMVDKISSLSLLETSELVKQLKEKLNIAEIAPMAAVAPAVASAAPSEEKAPEEKKEEKTTWNLKLESFDAGSKAKVIKEVKSLLGLSLVDAKKFVESAPKVLKENILKEDAEAIKSKLEKLSCKVVLE.

Residues 1 to 33 (MFRIASRQTRNLRALSSSKNWARSLVNTRSFRA) constitute a mitochondrion transit peptide.

Belongs to the bacterial ribosomal protein bL12 family. As to quaternary structure, component of the mitochondrial large ribosomal subunit (mt-LSU). Mature yeast 74S mitochondrial ribosomes consist of a small (37S) and a large (54S) subunit. The 37S small subunit contains a 15S ribosomal RNA (15S mt-rRNA) and at least 32 different proteins. The 54S large subunit contains a 21S rRNA (21S mt-rRNA) and at least 45 different proteins.

Its subcellular location is the mitochondrion. In terms of biological role, component of the mitochondrial ribosome (mitoribosome), a dedicated translation machinery responsible for the synthesis of mitochondrial genome-encoded proteins, including at least some of the essential transmembrane subunits of the mitochondrial respiratory chain. The mitoribosomes are attached to the mitochondrial inner membrane and translation products are cotranslationally integrated into the membrane. This is Large ribosomal subunit protein bL12m (mrpl12) from Schizosaccharomyces pombe (strain 972 / ATCC 24843) (Fission yeast).